Here is a 572-residue protein sequence, read N- to C-terminus: Mitochondrial distribution and morphology protein 34 (572 aa).

The 195-residue stretch at 1-195 (MAFNFNWSPL…LPAIIHRLSL (195 aa)) folds into the SMP-LTD domain. Disordered regions lie at residues 212 to 236 (TASANGEGPGQDPLASPPQDPVDAL), 321 to 426 (VGSM…PDND), 477 to 522 (SATP…DNPT), and 553 to 572 (CGPFWDRHSQEESPPPAYGH). Over residues 330-348 (SASMVSSQSRSSTPSHTFS) the composition is skewed to low complexity. Positions 358-370 (RHSKAHARKRKKR) are enriched in basic residues. Residues 371 to 381 (VVDLRRPKTTD) are compositionally biased toward basic and acidic residues. Composition is skewed to polar residues over residues 387-400 (SDESSFTESTSAPS) and 500-511 (DSSAGSSRQLPS).

This sequence belongs to the MDM34 family. As to quaternary structure, component of the ER-mitochondria encounter structure (ERMES) or MDM complex, composed of mmm1, mdm10, mdm12 and mdm34.

It localises to the mitochondrion outer membrane. Its function is as follows. Component of the ERMES/MDM complex, which serves as a molecular tether to connect the endoplasmic reticulum (ER) and mitochondria. Components of this complex are involved in the control of mitochondrial shape and protein biogenesis, and function in nonvesicular lipid trafficking between the ER and mitochondria. Mdm34 is required for the interaction of the ER-resident membrane protein mmm1 and the outer mitochondrial membrane-resident beta-barrel protein mdm10. The sequence is that of Mitochondrial distribution and morphology protein 34 from Aspergillus fumigatus (strain CBS 144.89 / FGSC A1163 / CEA10) (Neosartorya fumigata).